The following is a 263-amino-acid chain: Endonuclease 8 (263 aa).

Pro2 functions as the Schiff-base intermediate with DNA in the catalytic mechanism. Catalysis depends on Glu3, which acts as the Proton donor. Lys53 serves as the catalytic Proton donor; for beta-elimination activity. 3 residues coordinate DNA: Gln70, Arg125, and Asn169. Residues 229 to 263 form an FPG-type zinc finger; it reads KVFHRDGESCERCGGIIERTMLSSRPFYWCPHCQR. Arg253 acts as the Proton donor; for delta-elimination activity in catalysis.

It belongs to the FPG family. Zn(2+) serves as cofactor.

It catalyses the reaction 2'-deoxyribonucleotide-(2'-deoxyribose 5'-phosphate)-2'-deoxyribonucleotide-DNA = a 3'-end 2'-deoxyribonucleotide-(2,3-dehydro-2,3-deoxyribose 5'-phosphate)-DNA + a 5'-end 5'-phospho-2'-deoxyribonucleoside-DNA + H(+). Functionally, involved in base excision repair of DNA damaged by oxidation or by mutagenic agents. Acts as a DNA glycosylase that recognizes and removes damaged bases. Has a preference for oxidized pyrimidines, such as thymine glycol, 5,6-dihydrouracil and 5,6-dihydrothymine. Has AP (apurinic/apyrimidinic) lyase activity and introduces nicks in the DNA strand. Cleaves the DNA backbone by beta-delta elimination to generate a single-strand break at the site of the removed base with both 3'- and 5'-phosphates. This Pectobacterium carotovorum subsp. carotovorum (strain PC1) protein is Endonuclease 8.